The chain runs to 186 residues: MASTLSTITLRSPSPSTASSTHASIPFPKKALEFPIRTPKLHHRRATFLRPLAAVEAPEKVVQLGDEISNLTLADAQKLVEYLQDKLGVTAASFAPAAVAAAPGAAAEAPAVVEEKTEFDVVIDEVPSNARIATIKAVRALTSLALKEAKELIEGLPKKFKEGVSKDEAEDAKKQLEEAGAKVSIA.

Polar residues predominate over residues 1-11 (MASTLSTITLR). 2 disordered regions span residues 1–23 (MAST…STHA) and 162–186 (EGVS…VSIA). The transit peptide at 1–53 (MASTLSTITLRSPSPSTASSTHASIPFPKKALEFPIRTPKLHHRRATFLRPLA) directs the protein to the chloroplast. The segment covering 12–23 (SPSPSTASSTHA) has biased composition (low complexity). The segment covering 162–180 (EGVSKDEAEDAKKQLEEAG) has biased composition (basic and acidic residues).

This sequence belongs to the bacterial ribosomal protein bL12 family.

It is found in the plastid. The protein localises to the chloroplast. This chain is Large ribosomal subunit protein bL12c (RPL12), found in Nicotiana tabacum (Common tobacco).